A 675-amino-acid chain; its full sequence is DNA ligase (675 aa).

NAD(+) is bound by residues 43–47 (DYEYD), 92–93 (SM), and E122. Residue K124 is the N6-AMP-lysine intermediate of the active site. Positions 145, 179, 295, and 319 each coordinate NAD(+). Positions 413, 416, 431, and 436 each coordinate Zn(2+). The region spanning 597 to 675 (SPDGYYKGKK…ETEAIAKFEQ (79 aa)) is the BRCT domain.

This sequence belongs to the NAD-dependent DNA ligase family. LigA subfamily. The cofactor is Mg(2+). Mn(2+) serves as cofactor.

It catalyses the reaction NAD(+) + (deoxyribonucleotide)n-3'-hydroxyl + 5'-phospho-(deoxyribonucleotide)m = (deoxyribonucleotide)n+m + AMP + beta-nicotinamide D-nucleotide.. In terms of biological role, DNA ligase that catalyzes the formation of phosphodiester linkages between 5'-phosphoryl and 3'-hydroxyl groups in double-stranded DNA using NAD as a coenzyme and as the energy source for the reaction. It is essential for DNA replication and repair of damaged DNA. The sequence is that of DNA ligase from Pediococcus pentosaceus (strain ATCC 25745 / CCUG 21536 / LMG 10740 / 183-1w).